The following is a 219-amino-acid chain: tRNA (guanine-N(7)-)-methyltransferase (219 aa).

S-adenosyl-L-methionine is bound by residues Asp47, Glu72, Asn99, and Asp125. Asp125 is an active-site residue. The substrate site is built by Lys129 and Asp161.

Belongs to the class I-like SAM-binding methyltransferase superfamily. TrmB family.

The enzyme catalyses guanosine(46) in tRNA + S-adenosyl-L-methionine = N(7)-methylguanosine(46) in tRNA + S-adenosyl-L-homocysteine. The protein operates within tRNA modification; N(7)-methylguanine-tRNA biosynthesis. In terms of biological role, catalyzes the formation of N(7)-methylguanine at position 46 (m7G46) in tRNA. The chain is tRNA (guanine-N(7)-)-methyltransferase from Nostoc sp. (strain PCC 7120 / SAG 25.82 / UTEX 2576).